The chain runs to 120 residues: Glycine cleavage system H protein (120 aa).

Residues 17 to 99 (IATVGITAHA…RGAGWFFKLK (83 aa)) enclose the Lipoyl-binding domain. K58 is subject to N6-lipoyllysine.

This sequence belongs to the GcvH family. As to quaternary structure, the glycine cleavage system is composed of four proteins: P, T, L and H. (R)-lipoate serves as cofactor.

In terms of biological role, the glycine cleavage system catalyzes the degradation of glycine. The H protein shuttles the methylamine group of glycine from the P protein to the T protein. The chain is Glycine cleavage system H protein from Allorhizobium ampelinum (strain ATCC BAA-846 / DSM 112012 / S4) (Agrobacterium vitis (strain S4)).